Here is a 409-residue protein sequence, read N- to C-terminus: MKLKQRVVLLAILLVIFIFTKVFLIDNLDTSAANREDQRAFHRMMTGLRVELAPKLDHTLQSPWEIAAQWVVPREVYPEETPELGAVMHAMATKKIIKADVGYKGTQLKALLILEGGQKVVFKPKRYSRDHVVEGEPYAGYDRHNAEVAAFHLDRILGFHRAPLVVGRFVNLRTEIKPVATEQLLSTFLTVGNNTCFYGKCYYCRETEPACADGDIMEGSVTLWLPDVWPLQKHRHPWGRTYREGKLARWEYDESYCDAVKKTSPYDSGPRLLDIIDTAVFDYLIGNADRHHYESFQDDEGASMLILLDNAKSFGNPSLDERSILAPLYQCCIIRVSTWNRLNYLKNGVLKSALKSAMAHDPISPVLSDPHLDAVDQRLLSVLATVKQCTDQFGMDTVLVEDRMPLSHL.

The Cytoplasmic portion of the chain corresponds to 1–6; that stretch reads MKLKQR. A helical; Signal-anchor for type II membrane protein membrane pass occupies residues 7 to 25; it reads VVLLAILLVIFIFTKVFLI. Topologically, residues 26–409 are lumenal; sequence DNLDTSAANR…VEDRMPLSHL (384 aa). Residues glutamine 107 and lysine 123 each contribute to the ATP site. Aspartate 142 is a Mn(2+) binding site. The N-linked (GlcNAc...) asparagine glycan is linked to asparagine 193. Intrachain disulfides connect cysteine 196–cysteine 211 and cysteine 201–cysteine 204. 222–225 lines the ATP pocket; that stretch reads TLWL. 2 disulfides stabilise this stretch: cysteine 257–cysteine 331 and cysteine 332–cysteine 389. The active site involves aspartate 289. ATP-binding residues include glutamate 294 and aspartate 309. Residue aspartate 309 participates in Mn(2+) binding.

The protein belongs to the FAM20 family. It depends on Mn(2+) as a cofactor. Widely expressed. Strongly expressed in pancreas, spleen and fetal liver.

It localises to the golgi apparatus membrane. It carries out the reaction 3-O-(beta-D-galactosyl-(1-&gt;3)-beta-D-galactosyl-(1-&gt;4)-beta-D-xylosyl)-L-seryl-[protein] + ATP = 3-O-(beta-D-galactosyl-(1-&gt;3)-beta-D-galactosyl-(1-&gt;4)-beta-D-2-O-phosphoxylosyl)-L-seryl-[protein] + ADP + H(+). In terms of biological role, responsible for the 2-O-phosphorylation of xylose in the glycosaminoglycan-protein linkage region of proteoglycans thereby regulating the amount of mature GAG chains. Sulfated glycosaminoglycans (GAGs), including heparan sulfate and chondroitin sulfate, are synthesized on the so-called common GAG-protein linkage region (GlcUAbeta1-3Galbeta1-3Galbeta1-4Xylbeta1-O-Ser) of core proteins, which is formed by the stepwise addition of monosaccharide residues by the respective specific glycosyltransferases. Xylose 2-O-phosphorylation may influence the catalytic activity of B3GAT3 (GlcAT-I) which completes the precursor tetrasaccharide of GAG-protein linkage regions on which the repeating disaccharide region is synthesized. The polypeptide is Glycosaminoglycan xylosylkinase (Homo sapiens (Human)).